Here is a 183-residue protein sequence, read N- to C-terminus: Dual-action ribosomal maturation protein DarP (183 aa).

Belongs to the DarP family.

The protein resides in the cytoplasm. Functionally, member of a network of 50S ribosomal subunit biogenesis factors which assembles along the 30S-50S interface, preventing incorrect 23S rRNA structures from forming. Promotes peptidyl transferase center (PTC) maturation. The chain is Dual-action ribosomal maturation protein DarP from Salmonella enteritidis PT4 (strain P125109).